The chain runs to 360 residues: Hydroxyproline O-arabinosyltransferase RDN2 (360 aa).

Residues 13–33 traverse the membrane as a helical; Signal-anchor segment; that stretch reads VLGSSFATYNLVTMIIHYGSA.

The protein localises to the golgi apparatus membrane. The enzyme catalyses trans-4-hydroxy-L-prolyl-[protein] + UDP-beta-L-arabinofuranose = O-(beta-L-arabinofuranosyl)-trans-4-hydroxy-L-prolyl-[protein] + UDP + H(+). Glycosyltransferase involved in the O-arabinosylation of several proteins including extensins and small signaling peptides. Catalyzes the transfer of the initial L-arabinose to the hydroxyl group of Hyp residues. Probably involved in the arabinosylation of CLAVATA3/ESR-related (CLE) signaling peptides that move from root to shoot, to interact with SUNN receptor kinase signaling that regulates nodulation. Involved in long distance nodulation signaling events. Involved in the autoregulation of nodulation (AON), a long distance systemic signaling from root to shoot and back again, which allows legumes to limit the number of root nodules formed based on available nitrogen and previous rhizobial colonization. Functions in the root, upstream of the shoot receptor kinase SUNN and via CLE peptide, to control AON. This chain is Hydroxyproline O-arabinosyltransferase RDN2, found in Medicago truncatula (Barrel medic).